The chain runs to 692 residues: Elongation factor G (692 aa).

The tr-type G domain occupies Glu-8–Leu-282. GTP is bound by residues Ala-17–Thr-24, Asp-81–His-85, and Asn-135–Asp-138.

The protein belongs to the TRAFAC class translation factor GTPase superfamily. Classic translation factor GTPase family. EF-G/EF-2 subfamily.

The protein localises to the cytoplasm. Functionally, catalyzes the GTP-dependent ribosomal translocation step during translation elongation. During this step, the ribosome changes from the pre-translocational (PRE) to the post-translocational (POST) state as the newly formed A-site-bound peptidyl-tRNA and P-site-bound deacylated tRNA move to the P and E sites, respectively. Catalyzes the coordinated movement of the two tRNA molecules, the mRNA and conformational changes in the ribosome. The sequence is that of Elongation factor G from Streptococcus agalactiae serotype Ia (strain ATCC 27591 / A909 / CDC SS700).